The sequence spans 125 residues: uncharacterized protein (125 aa).

It is found in the plastid. This is an uncharacterized protein from Euglena longa (Euglenophycean alga).